Here is a 750-residue protein sequence, read N- to C-terminus: Ribosomal RNA large subunit methyltransferase K/L (750 aa).

One can recognise a THUMP domain in the interval 46–157; the sequence is TAYRLCLWSR…RGEAILSLDL (112 aa).

Belongs to the methyltransferase superfamily. RlmKL family.

It localises to the cytoplasm. The enzyme catalyses guanosine(2445) in 23S rRNA + S-adenosyl-L-methionine = N(2)-methylguanosine(2445) in 23S rRNA + S-adenosyl-L-homocysteine + H(+). The catalysed reaction is guanosine(2069) in 23S rRNA + S-adenosyl-L-methionine = N(2)-methylguanosine(2069) in 23S rRNA + S-adenosyl-L-homocysteine + H(+). Specifically methylates the guanine in position 2445 (m2G2445) and the guanine in position 2069 (m7G2069) of 23S rRNA. This is Ribosomal RNA large subunit methyltransferase K/L from Pseudomonas syringae pv. syringae (strain B728a).